The primary structure comprises 188 residues: FMN reductase (NADH) RutF (188 aa).

This sequence belongs to the non-flavoprotein flavin reductase family. RutF subfamily.

It catalyses the reaction FMNH2 + NAD(+) = FMN + NADH + 2 H(+). In terms of biological role, catalyzes the reduction of FMN to FMNH2 which is used to reduce pyrimidine by RutA via the Rut pathway. The chain is FMN reductase (NADH) RutF from Acinetobacter baylyi (strain ATCC 33305 / BD413 / ADP1).